A 275-amino-acid chain; its full sequence is Calcium-binding protein 4 (275 aa).

The span at 1 to 12 (MTTEQARGQQGP) shows a compositional bias: polar residues. Positions 1–112 (MTTEQARGQQ…SLHDAAQRTY (112 aa)) are disordered. The segment covering 38–55 (TRKRSKKERGLRGSRKRT) has biased composition (basic residues). Phosphoserine is present on S42. EF-hand domains follow at residues 129–164 (EELD…LGYM), 183–200 (GRVD…KLRE), 206–241 (LGVR…LLGE), and 243–275 (LAGP…LSRH). Ca(2+) is bound by residues D142, D144, D146, Y148, and E153. D219, D221, D223, R225, E230, D256, N258, D260, T262, and E267 together coordinate Ca(2+).

Interacts with CACNA1F and CACNA1D (via IQ domain) in a calcium independent manner. Interacts (via N-terminus) with UNC119. Post-translationally, phosphorylated. Phosphorylation levels change with the light conditions and regulate the activity. In terms of tissue distribution, expressed in retina and in the inner hair cells (IHC) of the cochlea.

Its subcellular location is the cytoplasm. It is found in the presynapse. In terms of biological role, involved in normal synaptic function through regulation of Ca(2+) influx and neurotransmitter release in photoreceptor synaptic terminals and in auditory transmission. Modulator of CACNA1D and CACNA1F, suppressing the calcium-dependent inactivation and shifting the activation range to more hyperpolarized voltages. The protein is Calcium-binding protein 4 (CABP4) of Homo sapiens (Human).